Here is a 126-residue protein sequence, read N- to C-terminus: Fluoride-specific ion channel FluC (126 aa).

The next 4 membrane-spanning stretches (helical) occupy residues 1-21 (MTAT…RFHA), 33-53 (AVFP…MGVL), 72-92 (VGVL…ALLV), and 97-117 (IGLA…GLFL). Residues Gly-76 and Thr-79 each coordinate Na(+).

This sequence belongs to the fluoride channel Fluc/FEX (TC 1.A.43) family.

Its subcellular location is the cell inner membrane. It catalyses the reaction fluoride(in) = fluoride(out). With respect to regulation, na(+) is not transported, but it plays an essential structural role and its presence is essential for fluoride channel function. Its function is as follows. Fluoride-specific ion channel. Important for reducing fluoride concentration in the cell, thus reducing its toxicity. In Novosphingobium aromaticivorans (strain ATCC 700278 / DSM 12444 / CCUG 56034 / CIP 105152 / NBRC 16084 / F199), this protein is Fluoride-specific ion channel FluC.